Here is a 234-residue protein sequence, read N- to C-terminus: Octanoyltransferase (234 aa).

The BPL/LPL catalytic domain occupies 43-231 (IPTRNYFLFV…HFQELFQAEL (189 aa)). Substrate is bound by residues 88–95 (RGGDITYH), 160–162 (AMG), and 173–175 (GFA). Catalysis depends on Cys191, which acts as the Acyl-thioester intermediate.

This sequence belongs to the LipB family.

The protein localises to the cytoplasm. It carries out the reaction octanoyl-[ACP] + L-lysyl-[protein] = N(6)-octanoyl-L-lysyl-[protein] + holo-[ACP] + H(+). Its pathway is protein modification; protein lipoylation via endogenous pathway; protein N(6)-(lipoyl)lysine from octanoyl-[acyl-carrier-protein]: step 1/2. Functionally, catalyzes the transfer of endogenously produced octanoic acid from octanoyl-acyl-carrier-protein onto the lipoyl domains of lipoate-dependent enzymes. Lipoyl-ACP can also act as a substrate although octanoyl-ACP is likely to be the physiological substrate. The sequence is that of Octanoyltransferase from Christiangramia forsetii (strain DSM 17595 / CGMCC 1.15422 / KT0803) (Gramella forsetii).